We begin with the raw amino-acid sequence, 106 residues long: Transcriptional and immune response regulator (106 aa).

Monomer. Interacts with NOTCH2 (via ANK repeats), the interaction inhibits the nuclear translocation of NOTCH2 N2ICD. Interacts (C-terminus) with CBY1 (C-terminus), TCIM competes with CTNNB1 for the interaction with CBY1. As to expression, ubiquitous. Expressed in thyroid papillary carcinoma. Expressed in liver, expression levels decrease in hepatocellular carcinoma. Slightly detected in normal lung, its expression is highly induced in lung cancer cells (at protein level).

Its subcellular location is the cytoplasm. It is found in the nucleus. The protein localises to the nucleolus. The protein resides in the nucleus speckle. Its function is as follows. Seems to be involved in the regulation of cell growth an differentiation, may play different and opposite roles depending on the tissue or cell type. May enhance the WNT-CTNNB1 pathway by relieving antagonistic activity of CBY1. Enhances the proliferation of follicular dendritic cells. Plays a role in the mitogen-activated MAPK2/3 signaling pathway, positively regulates G1-to-S-phase transition of the cell cycle. In endothelial cells, enhances key inflammatory mediators and inflammatory response through the modulation of NF-kappaB transcriptional regulatory activity. Involved in the regulation of heat shock response, seems to play a positive feedback with HSF1 to modulate heat-shock downstream gene expression. Plays a role in the regulation of hematopoiesis even if the mechanisms are unknown. In cancers such as thyroid or lung cancer, it has been described as promoter of cell proliferation, G1-to-S-phase transition and inhibitor of apoptosis. However, it negatively regulates self-renewal of liver cancer cells via suppresion of NOTCH2 signaling. This Homo sapiens (Human) protein is Transcriptional and immune response regulator.